A 314-amino-acid chain; its full sequence is tRNA pseudouridine synthase B (314 aa).

His43 contacts substrate. The active-site Nucleophile is Asp48. Tyr76, Tyr179, and Leu200 together coordinate substrate.

The protein belongs to the pseudouridine synthase TruB family. Type 1 subfamily.

The catalysed reaction is uridine(55) in tRNA = pseudouridine(55) in tRNA. Its function is as follows. Responsible for synthesis of pseudouridine from uracil-55 in the psi GC loop of transfer RNAs. This chain is tRNA pseudouridine synthase B, found in Salmonella arizonae (strain ATCC BAA-731 / CDC346-86 / RSK2980).